A 231-amino-acid chain; its full sequence is Urease accessory protein UreF (231 aa).

The protein belongs to the UreF family. UreD, UreF and UreG form a complex that acts as a GTP-hydrolysis-dependent molecular chaperone, activating the urease apoprotein by helping to assemble the nickel containing metallocenter of UreC. The UreE protein probably delivers the nickel.

The protein localises to the cytoplasm. Its function is as follows. Required for maturation of urease via the functional incorporation of the urease nickel metallocenter. This is Urease accessory protein UreF from Magnetococcus marinus (strain ATCC BAA-1437 / JCM 17883 / MC-1).